A 556-amino-acid polypeptide reads, in one-letter code: 2-methylpropanoate--CoA ligase CCL4 (556 aa).

Residues 192–200 (TSGTTSSPK), 325–330 (HGYGLT), D423, 435–438 (IKDR), and K531 contribute to the ATP site. Residues 260–325 (DSEIIYDMIK…TESLGFAVSH (66 aa)) form an SBD1 region. The tract at residues 326–402 (GYGLTETAGL…LRGGSVMLGY (77 aa)) is SBD2.

Belongs to the ATP-dependent AMP-binding enzyme family. In terms of tissue distribution, mostly expressed in old leaves and in cones and glandular trichomes (lupulin glands) after flowering, and, to a lower extent, in stems, young leaves and flowers.

Its subcellular location is the cytoplasm. It localises to the cytosol. The enzyme catalyses 2-methylpropanoate + ATP + CoA = 2-methylpropanoyl-CoA + AMP + diphosphate. It carries out the reaction propanoate + ATP + CoA = propanoyl-CoA + AMP + diphosphate. It catalyses the reaction butanoate + ATP + CoA = butanoyl-CoA + AMP + diphosphate. The catalysed reaction is 2-methylbutanoate + ATP + CoA = 2-methylbutanoyl-CoA + AMP + diphosphate. Its pathway is secondary metabolite biosynthesis. In terms of biological role, involved in the biosynthesis of prenylated phenolics natural products which contribute to the bitter taste of beer and display broad biological activities. Catalyzes the ligation of CoA on 2-methylpropanoate (isobutyric acid) and 2-methylbutanoate to produce 2-methylpropanoyl-CoA and 2-methylbutanoyl-CoA, respectively. Can also use propanoate and butanoate as substrates with a lower efficiency. The chain is 2-methylpropanoate--CoA ligase CCL4 from Humulus lupulus (European hop).